The sequence spans 88 residues: Translation initiation factor IF-1 2 (88 aa).

Residues 1-72 (MAKEELIEMQ…TKGRITFRHL (72 aa)) form the S1-like domain.

This sequence belongs to the IF-1 family. As to quaternary structure, component of the 30S ribosomal translation pre-initiation complex which assembles on the 30S ribosome in the order IF-2 and IF-3, IF-1 and N-formylmethionyl-tRNA(fMet); mRNA recruitment can occur at any time during PIC assembly.

Its subcellular location is the cytoplasm. Functionally, one of the essential components for the initiation of protein synthesis. Stabilizes the binding of IF-2 and IF-3 on the 30S subunit to which N-formylmethionyl-tRNA(fMet) subsequently binds. Helps modulate mRNA selection, yielding the 30S pre-initiation complex (PIC). Upon addition of the 50S ribosomal subunit IF-1, IF-2 and IF-3 are released leaving the mature 70S translation initiation complex. The sequence is that of Translation initiation factor IF-1 2 from Acidovorax sp. (strain JS42).